Reading from the N-terminus, the 374-residue chain is Heat stress transcription factor A-8 (374 aa).

The DNA-binding element occupies Val-17–Asn-112. A hydrophobic repeat HR-A/B region spans residues Thr-126–Met-192. An AHA1 motif is present at residues Asp-285–Leu-294. Positions Arg-298–Lys-303 match the Nuclear localization signal motif. Positions Lys-330 to Glu-339 match the AHA2 motif. The Nuclear export signal signature appears at Leu-363–Leu-370.

It belongs to the HSF family. Class A subfamily. Homotrimer. Post-translationally, exhibits temperature-dependent phosphorylation.

Its subcellular location is the cytoplasm. It localises to the nucleus. Functionally, transcriptional activator that specifically binds DNA sequence 5'-AGAAnnTTCT-3' known as heat shock promoter elements (HSE). The chain is Heat stress transcription factor A-8 (HSFA8) from Arabidopsis thaliana (Mouse-ear cress).